A 977-amino-acid chain; its full sequence is uncharacterized protein (977 aa).

A compositionally biased stretch (polar residues) spans 1-24; the sequence is MMQQRSGSLSLLSNAVQAGQSSDP. Positions 1–65 are disordered; sequence MMQQRSGSLS…HEKTKAGKDR (65 aa). The zn(2)-C6 fungal-type DNA-binding region spans 72–99; the sequence is CQSCRKKKVKCSGERPSCDQCLKHNIPC. Residues 176-195 form a disordered region; the sequence is LSHPTIVPSSNSSSLLNSTN. A compositionally biased stretch (low complexity) spans 177–195; the sequence is SHPTIVPSSNSSSLLNSTN. At S220 the chain carries Phosphoserine. Disordered regions lie at residues 287 to 307, 357 to 380, and 751 to 774; these read TDSL…DSNR, NSAS…NNSL, and HTPI…ANGA. Over residues 364–379 the composition is skewed to low complexity; that stretch reads STSYTNNNDTTSDNNS. Residues 751–770 are compositionally biased toward polar residues; sequence HTPINVTNGESQNNSNNDPS.

It localises to the cytoplasm. The protein resides in the nucleus. This is an uncharacterized protein from Schizosaccharomyces pombe (strain 972 / ATCC 24843) (Fission yeast).